Consider the following 648-residue polypeptide: DNA ligase (648 aa).

NAD(+) is bound by residues 30-34 (DEEYD) and 79-80 (SQ). Lysine 110 acts as the N6-AMP-lysine intermediate in catalysis. Residues arginine 131, glutamate 165, lysine 280, and lysine 304 each coordinate NAD(+). Positions 398, 401, 414, and 419 each coordinate Zn(2+). Residues 573-648 (VSENPFKNKT…LTEEEMNSLF (76 aa)) form the BRCT domain.

It belongs to the NAD-dependent DNA ligase family. LigA subfamily. Requires Mg(2+) as cofactor. Mn(2+) is required as a cofactor.

The catalysed reaction is NAD(+) + (deoxyribonucleotide)n-3'-hydroxyl + 5'-phospho-(deoxyribonucleotide)m = (deoxyribonucleotide)n+m + AMP + beta-nicotinamide D-nucleotide.. Its function is as follows. DNA ligase that catalyzes the formation of phosphodiester linkages between 5'-phosphoryl and 3'-hydroxyl groups in double-stranded DNA using NAD as a coenzyme and as the energy source for the reaction. It is essential for DNA replication and repair of damaged DNA. In Aliarcobacter butzleri (strain RM4018) (Arcobacter butzleri), this protein is DNA ligase.